The following is a 558-amino-acid chain: Urocanate hydratase (558 aa).

Residues 53–54 (GG), Q131, 177–179 (GMG), E197, R202, 243–244 (NA), 264–268 (QTSAH), 274–275 (YL), and Y323 each bind NAD(+). Residue C411 is part of the active site. G493 is a binding site for NAD(+).

This sequence belongs to the urocanase family. It depends on NAD(+) as a cofactor.

It localises to the cytoplasm. It carries out the reaction 4-imidazolone-5-propanoate = trans-urocanate + H2O. Its pathway is amino-acid degradation; L-histidine degradation into L-glutamate; N-formimidoyl-L-glutamate from L-histidine: step 2/3. Catalyzes the conversion of urocanate to 4-imidazolone-5-propionate. This Idiomarina loihiensis (strain ATCC BAA-735 / DSM 15497 / L2-TR) protein is Urocanate hydratase.